A 312-amino-acid polypeptide reads, in one-letter code: DNA-directed RNA polymerase subunit alpha (312 aa).

The interval 1-227 (MNNFYIKCLK…SFFSSLLENK (227 aa)) is alpha N-terminal domain (alpha-NTD). The interval 243–312 (PKNPHTNIAI…KNKLGIVLSN (70 aa)) is alpha C-terminal domain (alpha-CTD).

The protein belongs to the RNA polymerase alpha chain family. In plastids the minimal PEP RNA polymerase catalytic core is composed of four subunits: alpha, beta, beta', and beta''. When a (nuclear-encoded) sigma factor is associated with the core the holoenzyme is formed, which can initiate transcription.

The protein localises to the plastid. It is found in the chloroplast. The enzyme catalyses RNA(n) + a ribonucleoside 5'-triphosphate = RNA(n+1) + diphosphate. Functionally, DNA-dependent RNA polymerase catalyzes the transcription of DNA into RNA using the four ribonucleoside triphosphates as substrates. The polypeptide is DNA-directed RNA polymerase subunit alpha (Trieres chinensis (Marine centric diatom)).